The chain runs to 194 residues: dCTP deaminase (194 aa).

DCTP contacts are provided by residues 110 to 115, aspartate 128, 136 to 138, tyrosine 171, lysine 178, and glutamine 182; these read RSSLAR and VLE. Glutamate 138 serves as the catalytic Proton donor/acceptor.

Belongs to the dCTP deaminase family. As to quaternary structure, homotrimer.

The catalysed reaction is dCTP + H2O + H(+) = dUTP + NH4(+). Its pathway is pyrimidine metabolism; dUMP biosynthesis; dUMP from dCTP (dUTP route): step 1/2. Functionally, catalyzes the deamination of dCTP to dUTP. This chain is dCTP deaminase, found in Haemophilus ducreyi (strain 35000HP / ATCC 700724).